A 187-amino-acid chain; its full sequence is UPF0301 protein PBPRA3139 (187 aa).

It belongs to the UPF0301 (AlgH) family.

This chain is UPF0301 protein PBPRA3139, found in Photobacterium profundum (strain SS9).